The primary structure comprises 333 residues: Homocysteine S-methyltransferase 2 (333 aa).

One can recognise a Hcy-binding domain in the interval 8–327 (SMKDFLKQTG…TTIRAIHKRL (320 aa)). Cys-245, Cys-312, and Cys-313 together coordinate Zn(2+).

Monomer. It depends on Zn(2+) as a cofactor. In terms of tissue distribution, expressed predominantly in roots. Expressed in rosette leaves, cauline leaves and developing seeds.

The catalysed reaction is S-methyl-L-methionine + L-homocysteine = 2 L-methionine + H(+). Its function is as follows. Catalyzes methyl transfer from S-methylmethionine (SMM) to adenosyl-L-homocysteine (AdoMet). SMM degradation (by HMT-1, HMT-2 and HMT-3) and biosynthesis (by MMT1) constitute the SMM cycle in plants, which is probably required to achieve short term control of AdoMet level. This is Homocysteine S-methyltransferase 2 (HMT-2) from Arabidopsis thaliana (Mouse-ear cress).